The chain runs to 200 residues: LHFPL tetraspan subfamily member 6 protein (200 aa).

Positions 1–21 (MASSLTCAGVIWALLSFLCAA) are cleaved as a signal peptide. 2 consecutive transmembrane segments (helical) span residues 84-104 (ICTV…LTAI) and 123-143 (GIQF…PLGW). Asn-154 carries an N-linked (GlcNAc...) asparagine glycan. Residues 172–192 (CTGAGAAAAMVLCTWMACFAG) form a helical membrane-spanning segment.

It belongs to the LHFP family.

It is found in the membrane. The polypeptide is LHFPL tetraspan subfamily member 6 protein (Danio rerio (Zebrafish)).